Consider the following 414-residue polypeptide: uncharacterized protein (414 aa).

The tract at residues 204-230 (LVGTPAPGPNGSNSDGDSERASQDVRD) is disordered. Basic and acidic residues predominate over residues 220 to 230 (DSERASQDVRD).

The protein belongs to the CdaR family.

This is an uncharacterized protein from Mycobacterium tuberculosis (strain CDC 1551 / Oshkosh).